The primary structure comprises 519 residues: MAPQERLLIRGGRVVNDDFSQVADVLVEDGVVRALGRDLLPPGDTSRGLRILDAAGKLVLPGGIDTHTHMQFPFMGSQSVDDFHQGTKAALAGGTTMIIDFAIPQKGSSLIEAFETWRNWADPKVCCDYSLHVAVTWWSDKVKEEMKTLAQDKGVNSFKMFMAYKDLYMVQDQQMYAAFSQCKEIGAIAQVHAENGDLIAEGAKKMLALGITGPEGHELCRPEAVEAEATLRAITIASAVNCPLYIVHVMSKSAAKVIADAKREGKVVYGEPIAAGLGTDGTQYWNKEWRHAAHHVMGPPLRPDPSTPGFLMNLLANGDLTTTGSDNCTFNTCQKALGKDDFTKIPNGVNGVEDRMSVIWEKGVHSGKMDENRFVAVTSTNAAKIFNLYPKKGRIAVGSDADIVIWDPEATRTISAKTHHQAVNFNIFEGMVCHGVPLVTISRGRVVYEAGVFDVTAGHGKFIPRQPFAEFIYKRVKQRDQTCTPIPVKRAPYKGEVITLKPRETKEDDTAGTRMQGHS.

Zn(2+)-binding residues include H67 and H69. Phosphoserine is present on S79. K159 contacts Zn(2+). K159 carries the N6-carboxylysine modification. Residue Y164 coordinates substrate. The Zn(2+) site is built by H192 and H248. K256 is modified (N6-succinyllysine). Residue D326 coordinates Zn(2+). Position 347 (N347) interacts with substrate. Phosphothreonine is present on T510.

It belongs to the metallo-dependent hydrolases superfamily. Hydantoinase/dihydropyrimidinase family. Homotetramer. Zn(2+) serves as cofactor. Carboxylation allows a single lysine to coordinate two zinc ions.

It carries out the reaction 5,6-dihydrouracil + H2O = 3-(carbamoylamino)propanoate + H(+). Its function is as follows. Catalyzes the second step of the reductive pyrimidine degradation, the reversible hydrolytic ring opening of dihydropyrimidines. Can catalyze the ring opening of 5,6-dihydrouracil to N-carbamyl-alanine and of 5,6-dihydrothymine to N-carbamyl-amino isobutyrate. The chain is Dihydropyrimidinase (Dpys) from Rattus norvegicus (Rat).